The chain runs to 309 residues: Mitochondrial brown fat uncoupling protein 1 (309 aa).

At 1–10 (MLRAPGSDAP) the chain is on the mitochondrial intermembrane side. Residues 11–32 (PTLSVRIAAAAGAACLADMITF) form a helical membrane-spanning segment. 3 Solcar repeats span residues 11–104 (PTLS…VREW), 113–203 (ASLG…MKEA), and 212–297 (DDLP…LKRE). Over 33-75 (PLDTAKVRLQIQGEGQGQPPRAPRYRGVLGTVATLARTEGLQK) the chain is Mitochondrial matrix. Residue arginine 58 coordinates fatty acid 16:0. The chain crosses the membrane as a helical span at residues 76–98 (LYSGLPAGLQRQVGFASLRIGLY). The Mitochondrial intermembrane portion of the chain corresponds to 99-118 (DSVREWLSPGQGAAASLGSR). A helical transmembrane segment spans residues 119-135 (ISAGVMTGGAAVFIGQP). The Mitochondrial matrix portion of the chain corresponds to 136 to 180 (TEVVKVRLQAQSHLHGRKPRYTGTYNAYRIIATTEGLTGLWKGTT). A helical membrane pass occupies residues 181–197 (PNLMRNVIINCTELVTY). Residues 198–214 (DLMKEALVKNHLLADDL) are Mitochondrial intermembrane-facing. A helical membrane pass occupies residues 215–234 (PCHFLSALVAGFCTTVLSSP). At 235-268 (VDVVKTRFVNSVPEQYTSVPNCAMTMLTKEGPLA) the chain is on the mitochondrial matrix side. Cysteine 256 is subject to Cysteine sulfenic acid (-SOH). A helical transmembrane segment spans residues 269–291 (FFKGFVPSFLRLGSWNVIMFVCF). Lysine 271 contacts fatty acid 16:0. Over 292-309 (EQLKRELMKSGRTVDCAT) the chain is Mitochondrial intermembrane.

This sequence belongs to the mitochondrial carrier (TC 2.A.29) family. As to quaternary structure, most probably functions as a monomer. Binds one purine nucleotide per monomer. However, has also been suggested to function as a homodimer or a homotetramer. Tightly associates with cardiolipin in the mitochondrion inner membrane; may stabilize and regulate its activity. May undergo sulfenylation upon cold exposure. May increase the sensitivity of UCP1 thermogenic function to the activation by noradrenaline probably through structural effects. In terms of processing, may undergo ubiquitin-mediated proteasomal degradation.

Its subcellular location is the mitochondrion inner membrane. The catalysed reaction is H(+)(in) = H(+)(out). Has no constitutive proton transporter activity and has to be activated by long-chain fatty acids/LCFAs. Inhibited by purine nucleotides. Both purine nucleotides and LCFAs bind the cytosolic side of the transporter and directly compete to activate or inhibit it. Activated by noradrenaline and reactive oxygen species. Despite lacking canonical translational encoding for selenocysteine, a small pool of the protein has been observed to selectively incorporate selenocysteine at 'Cys-256'. Selenocysteine-modified protein is highly sensitive to redox modification and may constitute a pool of protein highly sensitive to activation by elevated levels of reactive oxygen species (ROS). Mitochondrial protein responsible for thermogenic respiration, a specialized capacity of brown adipose tissue and beige fat that participates in non-shivering adaptive thermogenesis to temperature and diet variations and more generally to the regulation of energy balance. Functions as a long-chain fatty acid/LCFA and proton symporter, simultaneously transporting one LCFA and one proton through the inner mitochondrial membrane. However, LCFAs remaining associated with the transporter via their hydrophobic tails, it results in an apparent transport of protons activated by LCFAs. Thereby, dissipates the mitochondrial proton gradient and converts the energy of substrate oxydation into heat instead of ATP. Regulates the production of reactive oxygen species/ROS by mitochondria. The chain is Mitochondrial brown fat uncoupling protein 1 from Canis lupus familiaris (Dog).